Reading from the N-terminus, the 181-residue chain is Fibroblast growth factor homolog (181 aa).

Residues 1–16 (MYRLLALVALASMADC) form the signal peptide.

This sequence belongs to the heparin-binding growth factors family.

This chain is Fibroblast growth factor homolog (FGF), found in Lepidoptera (butterflies and moths).